The sequence spans 255 residues: Putative Myb family transcription factor At1g14600 (255 aa).

The 61-residue stretch at 20–80 folds into the HTH myb-type domain; sequence RSPVPRLRWT…HLQMYRGSRI (61 aa). A DNA-binding region (H-T-H motif) is located at residues 51-76; it reads PKLVLKIMDVKGLTISHVKSHLQMYR. The disordered stretch occupies residues 80 to 110; sequence ITLLGKPEESSSPSSRRRRRQDNEEDHLHDN.

It localises to the nucleus. Its function is as follows. Putative transcription factor. The chain is Putative Myb family transcription factor At1g14600 from Arabidopsis thaliana (Mouse-ear cress).